Consider the following 254-residue polypeptide: Type III pantothenate kinase (254 aa).

Position 6–13 (6–13) interacts with ATP; the sequence is DVGNTNTT. Residues Tyr-100 and 107–110 contribute to the substrate site; that span reads GADR. Asp-109 (proton acceptor) is an active-site residue. Residue Asp-129 participates in K(+) binding. An ATP-binding site is contributed by Thr-132. Thr-184 contacts substrate.

This sequence belongs to the type III pantothenate kinase family. As to quaternary structure, homodimer. It depends on NH4(+) as a cofactor. K(+) serves as cofactor.

The protein resides in the cytoplasm. The enzyme catalyses (R)-pantothenate + ATP = (R)-4'-phosphopantothenate + ADP + H(+). Its pathway is cofactor biosynthesis; coenzyme A biosynthesis; CoA from (R)-pantothenate: step 1/5. In terms of biological role, catalyzes the phosphorylation of pantothenate (Pan), the first step in CoA biosynthesis. This chain is Type III pantothenate kinase, found in Anaeromyxobacter dehalogenans (strain 2CP-1 / ATCC BAA-258).